The following is a 627-amino-acid chain: DNA mismatch repair protein MutL (627 aa).

Residues Ala376–Ala404 form a disordered region.

It belongs to the DNA mismatch repair MutL/HexB family.

Functionally, this protein is involved in the repair of mismatches in DNA. It is required for dam-dependent methyl-directed DNA mismatch repair. May act as a 'molecular matchmaker', a protein that promotes the formation of a stable complex between two or more DNA-binding proteins in an ATP-dependent manner without itself being part of a final effector complex. The protein is DNA mismatch repair protein MutL of Aeromonas salmonicida (strain A449).